Here is a 536-residue protein sequence, read N- to C-terminus: Zinc finger protein 394 (536 aa).

Positions 18–45 are disordered; sequence AVKVEEDSPGSQEPSGSGDWQNPETSRK. Residue K20 forms a Glycyl lysine isopeptide (Lys-Gly) (interchain with G-Cter in SUMO2) linkage. Over residues 26-41 the composition is skewed to polar residues; sequence PGSQEPSGSGDWQNPE. One can recognise an SCAN box domain in the interval 44–126; sequence RKQFRQLRYQ…ALARTLQRAL (83 aa). In terms of domain architecture, KRAB spans 135 to 196; sequence ATFKDVAESL…KQEMSKEAES (62 aa). Residues K207 and K260 each participate in a glycyl lysine isopeptide (Lys-Gly) (interchain with G-Cter in SUMO2) cross-link. 3 C2H2-type zinc fingers span residues 328–350, 356–378, and 384–406; these read YKCDNCEKRFRQRSDLFKHQRTH, YQCQECGKSFSQSAALVKHQRTH, and YACPECGECFRQSSHLSRHQRTH. The C2H2-type 4; atypical zinc-finger motif lies at 412 to 433; the sequence is CKCEECGEIFHISSLFKHQRLH. Residue K413 forms a Glycyl lysine isopeptide (Lys-Gly) (interchain with G-Cter in SUMO2) linkage. 3 consecutive C2H2-type zinc fingers follow at residues 439-461, 467-489, and 495-517; these read HKCEVCEKSFKQRSDLFKHQRIH, YMCFVCERRFSQSATLIKHQRTH, and YKCFQCGERFRQSTHLVRHQRIH.

This sequence belongs to the krueppel C2H2-type zinc-finger protein family.

The protein localises to the nucleus. In terms of biological role, may be involved in transcriptional regulation. The chain is Zinc finger protein 394 (Znf394) from Rattus norvegicus (Rat).